A 158-amino-acid chain; its full sequence is Regulator of sigma D (158 aa).

It belongs to the Rsd/AlgQ family. As to quaternary structure, interacts with RpoD.

It localises to the cytoplasm. Binds RpoD and negatively regulates RpoD-mediated transcription activation by preventing the interaction between the primary sigma factor RpoD with the catalytic core of the RNA polymerase and with promoter DNA. May be involved in replacement of the RNA polymerase sigma subunit from RpoD to RpoS during the transition from exponential growth to the stationary phase. The sequence is that of Regulator of sigma D from Shigella boydii serotype 4 (strain Sb227).